Consider the following 253-residue polypeptide: Pre-mRNA-splicing factor SPF27 homolog (253 aa).

Residues 124-235 are a coiled coil; that stretch reads KQYLQKNQRS…IDSFKKEAAE (112 aa).

The protein belongs to the SPF27 family. Component of the multiprotein assembly MOS4-associated complex (MAC) at least composed of MOS4, CDC5 and PRL1. Interacts with CYCL1-1 and CDC5. Associated with the spliceosome. Interacts with ENY2.

The protein localises to the nucleus. Component of the MAC complex that probably regulates defense responses through transcriptional control and thereby is essential for plant innate immunity. Involved in mRNA splicing. This chain is Pre-mRNA-splicing factor SPF27 homolog (MOS4), found in Arabidopsis thaliana (Mouse-ear cress).